Consider the following 257-residue polypeptide: Serine/arginine-rich splicing factor 1 (257 aa).

Residue S2 is modified to N-acetylserine. The RRM 1 domain occupies 16–91; the sequence is CRIYVGNLPP…YRLRVEFPRS (76 aa). Positions 88–116 are disordered; it reads FPRSGRGTGRGGGGGGGGGAPRGRYGPPS. The segment covering 93–108 has biased composition (gly residues); sequence RGTGRGGGGGGGGGAP. The RRM 2 domain maps to 121–195; the sequence is YRVIVSGLPP…ETAYIRVKVD (75 aa).

It localises to the cytoplasm. The protein localises to the nucleus speckle. Functionally, may play a role in preventing exon skipping, ensuring the accuracy of splicing and regulating alternative splicing. In Gallus gallus (Chicken), this protein is Serine/arginine-rich splicing factor 1 (SRSF1).